A 234-amino-acid polypeptide reads, in one-letter code: Ubiquitin domain-containing protein 2 (234 aa).

Residues 1 to 46 (MGGCVGAQHDSSGSLNENSDGTGVALGRNQPLKKEKPKWKSDYPMT) form a disordered region. The segment covering 9–21 (HDSSGSLNENSDG) has biased composition (polar residues). Positions 32–41 (LKKEKPKWKS) are enriched in basic and acidic residues. A Ubiquitin-like domain is found at 152–227 (SQLRLRLSTG…VQVIVSQPVQ (76 aa)).

It localises to the cytoplasm. The chain is Ubiquitin domain-containing protein 2 (Ubtd2) from Mus musculus (Mouse).